Consider the following 920-residue polypeptide: Translation initiation factor IF-2 (920 aa).

The segment at 33–305 (KSASSTVEAP…RGRKSKRAKR (273 aa)) is disordered. Residues 53-86 (SKSAPAPAKSAGNGATAAPATSATPATAAAAAAP) are compositionally biased toward low complexity. Composition is skewed to pro residues over residues 87 to 159 (APAP…PAPR), 179 to 193 (PRPQ…PGTP), and 201 to 212 (NMPPRPAGPRPG). Gly residues predominate over residues 225 to 291 (PGGRGPGGGG…GAAGAFGRPG (67 aa)). Residues 295-304 (KRGRKSKRAK) show a composition bias toward basic residues. A tr-type G domain is found at 416–588 (IRPPVVTVMG…VLLTADASLD (173 aa)). The G1 stretch occupies residues 425 to 432 (GHVDHGKT). Position 425–432 (425–432 (GHVDHGKT)) interacts with GTP. The interval 450-454 (GITQH) is G2. The segment at 475–478 (DTPG) is G3. GTP is bound by residues 475 to 479 (DTPGH) and 529 to 532 (NKID). Positions 529–532 (NKID) are G4. The tract at residues 565–567 (SAK) is G5.

The protein belongs to the TRAFAC class translation factor GTPase superfamily. Classic translation factor GTPase family. IF-2 subfamily.

The protein localises to the cytoplasm. Its function is as follows. One of the essential components for the initiation of protein synthesis. Protects formylmethionyl-tRNA from spontaneous hydrolysis and promotes its binding to the 30S ribosomal subunits. Also involved in the hydrolysis of GTP during the formation of the 70S ribosomal complex. The sequence is that of Translation initiation factor IF-2 from Mycobacterium sp. (strain JLS).